Here is a 241-residue protein sequence, read N- to C-terminus: Gamma-interferon-inducible lysosomal thiol reductase-like protein (241 aa).

An N-terminal signal peptide occupies residues 1-18; that stretch reads MLFKSLLLLSVYAVTCYG. Asn105 and Asn152 each carry an N-linked (GlcNAc...) asparagine glycan. The chain crosses the membrane as a helical span at residues 218-235; sequence STGSAISSLGMIVTVVAV.

This sequence belongs to the GILT family. As to expression, salivary gland (at protein level). Low-level expression in midgut (at protein level). Expressed in head and leg tissues. Ovary. Fat body. In terms of tissue distribution, (Microbial infection) Detected with Plasmodium berghei sporozoites isolated from the saliva of infected Anopheles gambiae mosquitoes (at protein level).

The protein resides in the membrane. Its function is as follows. Required for normal development of ovary and testis. (Microbial infection) Interacts with the surface of Plasmodium berghei sporozoites. Reduces P.berghei sporozoite cell traversal activity and transmission. Limits the motility of P.berghei sporozoites. Decreases the levels of host liver infection by P.berghei sporozoites. Does not affect P.berghei sporozoite viability. Indirectly promotes P.berghei survival in mosquitoes by influencing ovarian development and the subsequent production of 20-hydroxyecdysone and vitellogenin, which, in turn, modulates TEP1-dependent parasite killing. Promotes P.berghei infection in mosquitoes, most likely impacting the oocyst stage of parasite development. In terms of biological role, (Microbial infection) Promotes Plasmodium falciparum survival in mosquitoes. In Anopheles gambiae (African malaria mosquito), this protein is Gamma-interferon-inducible lysosomal thiol reductase-like protein.